We begin with the raw amino-acid sequence, 338 residues long: Ketol-acid reductoisomerase (NADP(+)) (338 aa).

The region spanning 1-181 (MKVYYDKDAD…GGGKAGIIET (181 aa)) is the KARI N-terminal Rossmann domain. Residues 24-27 (YGSQ), R47, and S52 contribute to the NADP(+) site. The active site involves H107. An NADP(+)-binding site is contributed by G133. The region spanning 182-327 (NFREETETDL…EKLRAMMPWI (146 aa)) is the KARI C-terminal knotted domain. Mg(2+)-binding residues include D190, E194, E226, and E230. Residue S251 participates in substrate binding.

It belongs to the ketol-acid reductoisomerase family. Requires Mg(2+) as cofactor.

The enzyme catalyses (2R)-2,3-dihydroxy-3-methylbutanoate + NADP(+) = (2S)-2-acetolactate + NADPH + H(+). The catalysed reaction is (2R,3R)-2,3-dihydroxy-3-methylpentanoate + NADP(+) = (S)-2-ethyl-2-hydroxy-3-oxobutanoate + NADPH + H(+). The protein operates within amino-acid biosynthesis; L-isoleucine biosynthesis; L-isoleucine from 2-oxobutanoate: step 2/4. Its pathway is amino-acid biosynthesis; L-valine biosynthesis; L-valine from pyruvate: step 2/4. Involved in the biosynthesis of branched-chain amino acids (BCAA). Catalyzes an alkyl-migration followed by a ketol-acid reduction of (S)-2-acetolactate (S2AL) to yield (R)-2,3-dihydroxy-isovalerate. In the isomerase reaction, S2AL is rearranged via a Mg-dependent methyl migration to produce 3-hydroxy-3-methyl-2-ketobutyrate (HMKB). In the reductase reaction, this 2-ketoacid undergoes a metal-dependent reduction by NADPH to yield (R)-2,3-dihydroxy-isovalerate. This chain is Ketol-acid reductoisomerase (NADP(+)), found in Variovorax paradoxus (strain S110).